The chain runs to 208 residues: FMN-dependent NADH:quinone oxidoreductase (208 aa).

FMN-binding positions include 17-19 (SNS), 99-102 (MWNL), and 143-146 (SRGG).

Belongs to the azoreductase type 1 family. As to quaternary structure, homodimer. Requires FMN as cofactor.

It catalyses the reaction 2 a quinone + NADH + H(+) = 2 a 1,4-benzosemiquinone + NAD(+). The enzyme catalyses N,N-dimethyl-1,4-phenylenediamine + anthranilate + 2 NAD(+) = 2-(4-dimethylaminophenyl)diazenylbenzoate + 2 NADH + 2 H(+). Its function is as follows. Quinone reductase that provides resistance to thiol-specific stress caused by electrophilic quinones. Functionally, also exhibits azoreductase activity. Catalyzes the reductive cleavage of the azo bond in aromatic azo compounds to the corresponding amines. This chain is FMN-dependent NADH:quinone oxidoreductase, found in Staphylococcus aureus (strain MRSA252).